The following is a 243-amino-acid chain: Venom nerve growth factor (243 aa).

The N-terminal stretch at 1 to 18 (MSMLCYTLIIAFLIGIWA) is a signal peptide. A propeptide spanning residues 19–125 (APKSEDNVPL…TLNRNIRTKR (107 aa)) is cleaved from the precursor. The segment at 45–66 (HEGLKTSRNTDQRHLAPKKAED) is disordered. Positions 46–66 (EGLKTSRNTDQRHLAPKKAED) are enriched in basic and acidic residues. Intrachain disulfides connect Cys139/Cys204, Cys182/Cys232, and Cys192/Cys234. Asn148 carries N-linked (GlcNAc...) asparagine glycosylation.

This sequence belongs to the NGF-beta family. In terms of assembly, homodimer; non-covalently linked. In terms of tissue distribution, expressed by the venom gland.

Its subcellular location is the secreted. Its function is as follows. Nerve growth factor is important for the development and maintenance of the sympathetic and sensory nervous systems. It stimulates division and differentiation of sympathetic and embryonic sensory neurons as well as basal forebrain cholinergic neurons in the brain. Its relevance in the snake venom is not clear. However, it has been shown to inhibit metalloproteinase-dependent proteolysis of platelet glycoprotein Ib alpha, suggesting a metalloproteinase inhibition to prevent metalloprotease autodigestion and/or protection against prey proteases. Binds a lipid between the two protein chains in the homodimer. The lipid-bound form promotes histamine relase from mouse mast cells, contrary to the lipid-free form. The sequence is that of Venom nerve growth factor from Cryptophis nigrescens (Eastern small-eyed snake).